Here is a 583-residue protein sequence, read N- to C-terminus: MGGLQKKKYESGSATNYITRNKARKKLSLSLADFRRLCILKGIYPHEPKHKKKVNKGSTAARTYYLLKDIRFLLHEPIVGKFREYKIFVRKLRKAYGKAEWSAVERLKENKPGYKLDHIIKERYPTFIDALRDVDDALSMCFLFSTFARTGKCHVQTIQLCRRLSVEWMNYIISSRSLRKVFLSIKGIYYQAEVLGQTITWIVPYQFAHNHPTDVDYRVMATFTELYTTLLGFVNFRLYQTLNLVYPPKLDGQGEISLKAEFEEDYALESESYTEKLSALSASLARMVASVEEEEAELDHFPTEGEDQEKMEVREKMEQQQSKQKKLFEGLKFFLNREVPRESLAFVIRCFGGEVSWDKSLCIGSTYEATDETITHHIVDRPSMDKQYINRYYIQPQWVYDSVNAKIQLPVEEYFLGVTLPPHLSPFVEETEGDYVPPEKLKLMALQRGEKPQAEEDEEEEGEEEEDDEEDEEDDEQSEDEEEAEEEANLAEMEEKRSQGKSLSVKVTPGKAKAENRARAAEEEKAEEKRLAIMMMKKKEKYLYDKIMFGKKRKVREANKLAAKRKAHDDASKADKKKKKKKC.

A coiled-coil region spans residues 275–329 (EKLSALSASLARMVASVEEEEAELDHFPTEGEDQEKMEVREKMEQQQSKQKKLFE). The 94-residue stretch at 323 to 416 (KQKKLFEGLK…IQLPVEEYFL (94 aa)) folds into the BRCT domain. Disordered stretches follow at residues 448-526 (RGEK…EEKA) and 558-583 (ANKL…KKKC). The segment covering 455–489 (EEDEEEEGEEEEDDEEDEEDDEQSEDEEEAEEEAN) has biased composition (acidic residues). The segment covering 512-526 (AKAENRARAAEEEKA) has biased composition (basic and acidic residues).

The protein belongs to the pescadillo family. In terms of assembly, component of the PeBoW complex, composed of bop1, pes1 and wdr12. The complex is held together by bop1, which interacts with pes1 via its N-terminal domain and with wdr12 via a high-affinity interaction between the seven-bladed beta-propeller domains of the 2 proteins. The PeBoW complex associates with the 66S pre-ribosome.

The protein localises to the nucleus. The protein resides in the nucleolus. It is found in the nucleoplasm. In terms of biological role, component of the PeBoW complex, which is required for maturation of 28S and 5.8S ribosomal RNAs and formation of the 60S ribosome. The polypeptide is Pescadillo (pes) (Danio rerio (Zebrafish)).